Reading from the N-terminus, the 536-residue chain is Sensory rhodopsin I transducer (536 aa).

The Cytoplasmic segment spans residues 2 to 14; the sequence is TIAWARRRYGVKL. A helical membrane pass occupies residues 15-29; sequence GLGYIATAGLLVGVG. Residues 30–39 lie on the Extracellular side of the membrane; sequence VTTNDVPSTI. A helical membrane pass occupies residues 40-55; the sequence is VAGIAGLLTLGSINAA. One can recognise an HAMP 1 domain in the interval 55 to 107; it reads AETVASIKEIAAQTERVANGNLEQEVTSTRTDEFGSLADSIEQMRQSLRGRLN. Topologically, residues 56 to 536 are cytoplasmic; the sequence is ETVASIKEIA…MRAGADGGGA (481 aa). Residues 116 to 145 form a disordered region; that stretch reads LEETQAEAETAREEAEQAKQEAQAAEREAR. Residues 124–145 show a composition bias toward basic and acidic residues; it reads ETAREEAEQAKQEAQAAEREAR. One can recognise an HAMP 2 domain in the interval 149–202; it reads ATYQDTAKRYGETMEAAATGDLTQRVDVDTDHEAMETVGTAFNQMMDDLQATVR. One can recognise a Methyl-accepting transducer domain in the interval 221-459; sequence TSADIEASAG…STATSVERVA (239 aa). Glu266 carries the post-translational modification Glutamate methyl ester (Glu). The disordered stretch occupies residues 278-307; that stretch reads SEDVATASDAARDSSKSALDEMSSIETEVD. The span at 287–296 shows a compositional bias: basic and acidic residues; sequence AARDSSKSAL. Glu473 bears the Glutamate methyl ester (Glu) mark. A disordered region spans residues 512–536; sequence TEDSETAGGSVEQPVMRAGADGGGA.

Belongs to the methyl-accepting chemotaxis (MCP) protein family. Methylated by CheR.

Its subcellular location is the cell membrane. Its function is as follows. Transduces signals from the phototaxis receptor sensory rhodopsin I (SR-I) to the flagellar motor. Responds to light changes through the variation of the level of methylation. This chain is Sensory rhodopsin I transducer (htr1), found in Halobacterium salinarum (strain ATCC 29341 / DSM 671 / R1).